A 92-amino-acid chain; its full sequence is MTRSLKKNPFVAKHLLRKIEKLNTKAEKEIIRTWSRASTIIPTMIGHTIAIHNGREHLPVYIIDLMVGHKLGEFSPTINFRGHAKNDNRSRR.

It belongs to the universal ribosomal protein uS19 family.

It localises to the plastid. Its subcellular location is the chloroplast. Protein S19 forms a complex with S13 that binds strongly to the 16S ribosomal RNA. The sequence is that of Small ribosomal subunit protein uS19c from Lobularia maritima (Sweet alyssum).